A 1203-amino-acid chain; its full sequence is Kinesin-like protein KIN-14Q (1203 aa).

Residues 1–28 form a disordered region; sequence MEDCCDPLLATDASPRPESFSRSEKDIA. Basic and acidic residues predominate over residues 19-28; the sequence is SFSRSEKDIA. Residues 336 to 395 are a coiled coil; that stretch reads ENLVCRAEEEAEGMRSDCEQQRKEMEDMKRMVEELKLENQQKTRECEEALNSLSEIQNEL. One can recognise a Kinesin motor domain in the interval 499–825; sequence NIRVFCRCRP…LNFASRVRGI (327 aa). 582–589 is an ATP binding site; the sequence is GQTGTGKT. Residues 846–901 are a coiled coil; it reads VEKWKQDMKGKDEQIRKMEETMYGLEAKIKERDTKNKTLQDKVKELESQLLVERKL. The tract at residues 907-931 is disordered; sequence DTKIAEQQTKQQTEDENNTSKRPPL.

The protein belongs to the TRAFAC class myosin-kinesin ATPase superfamily. Kinesin family. KIN-14 subfamily.

The chain is Kinesin-like protein KIN-14Q from Arabidopsis thaliana (Mouse-ear cress).